The sequence spans 97 residues: UPF0125 protein plu3376 (97 aa).

Belongs to the UPF0125 (RnfH) family.

This chain is UPF0125 protein plu3376, found in Photorhabdus laumondii subsp. laumondii (strain DSM 15139 / CIP 105565 / TT01) (Photorhabdus luminescens subsp. laumondii).